A 504-amino-acid chain; its full sequence is Beta-glucosidase 24 (504 aa).

The first 18 residues, 1-18 (MELLWLLLLLLMASSTSS), serve as a signal peptide directing secretion. Gln-47 contributes to the a beta-D-glucoside binding site. A glycan (N-linked (GlcNAc...) asparagine) is linked at Asn-75. A beta-D-glucoside contacts are provided by residues His-151 and 196–197 (NE). Glu-197 functions as the Proton donor in the catalytic mechanism. Cys-216 and Cys-224 are oxidised to a cystine. A glycan (N-linked (GlcNAc...) asparagine) is linked at Asn-329. Position 340 (Tyr-340) interacts with a beta-D-glucoside. Asn-371 carries N-linked (GlcNAc...) asparagine glycosylation. Glu-411 contacts a beta-D-glucoside. Glu-411 serves as the catalytic Nucleophile. Asn-421 carries N-linked (GlcNAc...) asparagine glycosylation. A beta-D-glucoside contacts are provided by residues Trp-460, 467 to 468 (EW), and Phe-476.

It belongs to the glycosyl hydrolase 1 family.

The enzyme catalyses Hydrolysis of terminal, non-reducing beta-D-glucosyl residues with release of beta-D-glucose.. This is Beta-glucosidase 24 (BGLU24) from Oryza sativa subsp. japonica (Rice).